Reading from the N-terminus, the 156-residue chain is 6,7-dimethyl-8-ribityllumazine synthase (156 aa).

5-amino-6-(D-ribitylamino)uracil contacts are provided by residues F23, 57–59 (AFE), and 81–83 (AVI). A (2S)-2-hydroxy-3-oxobutyl phosphate-binding site is contributed by 86–87 (AT). H89 functions as the Proton donor in the catalytic mechanism. N114 is a 5-amino-6-(D-ribitylamino)uracil binding site. Residue R128 participates in (2S)-2-hydroxy-3-oxobutyl phosphate binding.

Belongs to the DMRL synthase family.

The enzyme catalyses (2S)-2-hydroxy-3-oxobutyl phosphate + 5-amino-6-(D-ribitylamino)uracil = 6,7-dimethyl-8-(1-D-ribityl)lumazine + phosphate + 2 H2O + H(+). The protein operates within cofactor biosynthesis; riboflavin biosynthesis; riboflavin from 2-hydroxy-3-oxobutyl phosphate and 5-amino-6-(D-ribitylamino)uracil: step 1/2. Catalyzes the formation of 6,7-dimethyl-8-ribityllumazine by condensation of 5-amino-6-(D-ribitylamino)uracil with 3,4-dihydroxy-2-butanone 4-phosphate. This is the penultimate step in the biosynthesis of riboflavin. This chain is 6,7-dimethyl-8-ribityllumazine synthase, found in Aliarcobacter butzleri (strain RM4018) (Arcobacter butzleri).